Reading from the N-terminus, the 527-residue chain is Methane monooxygenase component A alpha chain (527 aa).

The Fe cation site is built by glutamate 114, glutamate 144, and histidine 147. The active site involves cysteine 151. The Fe cation site is built by glutamate 209, glutamate 243, and histidine 246.

Belongs to the TmoA/XamoA family. M.capsulatus has two forms of methane monooxygenase, a soluble and a membrane-bound type. The soluble type consists of four components (A to D): protein A, comprising three chains, in an alpha-2, beta-2, gamma-2 configuration, is a nonheme iron protein containing an unusual mu-hydroxo bridge structure at its active site and interacts with both oxygen and methane. Requires Fe cation as cofactor.

The enzyme catalyses methane + NADH + O2 + H(+) = methanol + NAD(+) + H2O. It catalyses the reaction methane + NADPH + O2 + H(+) = methanol + NADP(+) + H2O. Responsible for the initial oxygenation of methane to methanol in methanotrophs. It also catalyzes the monohydroxylation of a variety of unactivated alkenes, alicyclic, aromatic and heterocyclic compounds. The chain is Methane monooxygenase component A alpha chain (mmoX) from Methylococcus capsulatus (strain ATCC 33009 / NCIMB 11132 / Bath).